A 29-amino-acid polypeptide reads, in one-letter code: Cysteine-rich venom protein 25-A (29 aa).

It belongs to the CRISP family. Contains 8 disulfide bonds. As to expression, expressed by the venom gland.

It is found in the secreted. This chain is Cysteine-rich venom protein 25-A, found in Naja haje haje (Egyptian cobra).